We begin with the raw amino-acid sequence, 184 residues long: Peptide deformylase 2 (184 aa).

Fe cation contacts are provided by C110 and H153. E154 is an active-site residue. Residue H157 coordinates Fe cation.

Belongs to the polypeptide deformylase family. Requires Fe(2+) as cofactor.

It carries out the reaction N-terminal N-formyl-L-methionyl-[peptide] + H2O = N-terminal L-methionyl-[peptide] + formate. Functionally, removes the formyl group from the N-terminal Met of newly synthesized proteins. Requires at least a dipeptide for an efficient rate of reaction. N-terminal L-methionine is a prerequisite for activity but the enzyme has broad specificity at other positions. The chain is Peptide deformylase 2 from Bacillus cereus (strain ATCC 14579 / DSM 31 / CCUG 7414 / JCM 2152 / NBRC 15305 / NCIMB 9373 / NCTC 2599 / NRRL B-3711).